The chain runs to 1334 residues: SCAR-like protein 2 (1334 aa).

The span at 197-207 (KTGNFQREKKS) shows a compositional bias: basic and acidic residues. 10 disordered regions span residues 197-281 (KTGN…SSFS), 294-331 (DTKP…GTSA), 481-516 (PDSS…ADAP), 568-602 (PNQS…SSYT), 643-668 (DKPT…TVES), 791-832 (STSH…KNII), 931-956 (FEKK…YSEK), 1000-1026 (FQLL…GRSY), 1248-1268 (SGQQ…DTKN), and 1280-1304 (RSKT…TANS). Residues 241-256 (VQLTSRHFATPSTDGR) show a composition bias toward polar residues. The segment covering 310-319 (SNNNLHKLSN) has biased composition (low complexity). The segment covering 320 to 330 (TPLHTRLNGTS) has biased composition (polar residues). The span at 574-595 (DSKEIPDSKAEDAPIDSPEKLE) shows a compositional bias: basic and acidic residues. Residues 791 to 823 (STSHSSETNQSTVRTPDTVIGQTEGSTGCSTSF) show a composition bias toward polar residues. Over residues 945–956 (SSLFSSSHYSEK) the composition is skewed to low complexity. The span at 1248–1260 (SGQQKLNGHEKSK) shows a compositional bias: basic and acidic residues. Residues 1271 to 1289 (EREELLQQIRSKTFNLRRT) enclose the WH2 domain. A compositionally biased stretch (low complexity) spans 1289–1304 (TNASKTNTSSPTTANS).

This sequence belongs to the SCAR/WAVE family.

The protein resides in the cytoplasm. Its subcellular location is the cytoskeleton. Involved in regulation of actin and microtubule organization. Part of a WAVE complex that activates the Arp2/3 complex. The polypeptide is SCAR-like protein 2 (Oryza sativa subsp. japonica (Rice)).